The following is an 852-amino-acid chain: Vacuolar protein sorting-associated protein 16 homolog (852 aa).

The protein belongs to the VPS16 family. In terms of assembly, probable core component of at least two putative endosomal tethering complexes, the homotypic fusion and vacuole protein sorting (HOPS) complex and the class C core vacuole/endosome tethering (CORVET) complex. Their common core is composed of the class C Vps proteins vps-11, vps-16 and vps-18, which in HOPS further associates with vps-33.1, vps-39 and vps-41 and in CORVET with vps-8 and vps-33.2.

The protein localises to the late endosome membrane. It localises to the lysosome membrane. Functionally, plays a role in vesicle-mediated protein trafficking to lysosomal compartments including the endocytic membrane transport pathways. Believed to act as a core component of the putative HOPS and CORVET endosomal tethering complexes which are proposed to be involved in the rab-5-to-rab-7 endosome conversion probably implicating sand-1, and via binding SNAREs and SNARE complexes to mediate tethering and docking events during SNARE-mediated membrane fusion. The HOPS complex is proposed to be recruited to rab-7 on the late endosomal membrane and to regulate late endocytic, phagocytic and autophagic traffic towards lysosomes. Within the HOPS complex, contributes to the normal development of gut granules in the adult intestine. The CORVET complex is proposed to function as a rab-5 effector to mediate early endosome fusion probably in specific endosome subpopulations. Required for recruitment of vps-33.1 to the HOPS complex. Required for fusion of endosomes and autophagosomes with lysosomes; the function is dependent on its association with vps-33.1 but not vps-33.2. The chain is Vacuolar protein sorting-associated protein 16 homolog from Caenorhabditis elegans.